The following is a 132-amino-acid chain: Precursor of CEP10 (132 aa).

The signal sequence occupies residues 1 to 19 (MKLFIIIVVTSLTISKVFD). The propeptide occupies 20–66 (KTLVTIEARNLRKMDRHEHFNANEDFVEAKMLKKIDNKNNLNNRCIN). 2 positions are modified to hydroxyproline: P70 and P73. Residues 82 to 91 (PKVINNKFTK) constitute a propeptide that is removed on maturation. P95, P98, and P102 each carry hydroxyproline. Residues 107-116 (LRVVNNKFTN) constitute a propeptide that is removed on maturation. Hydroxyproline occurs at positions 120, 123, and 127. A propeptide is located at residue P132.

This sequence belongs to the C-terminally encoded plant signaling peptide (CEP) family. In terms of assembly, interacts with CEP receptors (e.g. CEPR1 and CEPR2). The mature small signaling peptide is generated by proteolytic processing of the longer precursor.

It is found in the secreted. The protein resides in the extracellular space. It localises to the apoplast. Its function is as follows. Extracellular signaling peptide that may regulate primary root growth rate and systemic nitrogen (N)-demand signaling. In Arabidopsis thaliana (Mouse-ear cress), this protein is Precursor of CEP10.